Consider the following 519-residue polypeptide: Ribonuclease Y (519 aa).

A helical transmembrane segment spans residues 3–23 (PMTVLISILLTLLGLVVGYYV). Residues 209–272 (TVSVVNLPND…ETARIALDKL (64 aa)) form the KH domain. The HD domain occupies 335-428 (VLKHSMEVAF…VAAADALSAA (94 aa)).

The protein belongs to the RNase Y family.

It localises to the cell membrane. Functionally, endoribonuclease that initiates mRNA decay. In Bacillus velezensis (strain DSM 23117 / BGSC 10A6 / LMG 26770 / FZB42) (Bacillus amyloliquefaciens subsp. plantarum), this protein is Ribonuclease Y.